A 161-amino-acid polypeptide reads, in one-letter code: Urease accessory protein UreE (161 aa).

The interval 138–161 is disordered; sequence RGAYHAHGGHSHDHGQGHHHHDHG.

Belongs to the UreE family.

It is found in the cytoplasm. Involved in urease metallocenter assembly. Binds nickel. Probably functions as a nickel donor during metallocenter assembly. This Agrobacterium fabrum (strain C58 / ATCC 33970) (Agrobacterium tumefaciens (strain C58)) protein is Urease accessory protein UreE.